The chain runs to 318 residues: Transaldolase (318 aa).

Residue K131 is the Schiff-base intermediate with substrate of the active site.

It belongs to the transaldolase family. Type 1 subfamily. As to quaternary structure, homodimer.

The protein localises to the cytoplasm. It carries out the reaction D-sedoheptulose 7-phosphate + D-glyceraldehyde 3-phosphate = D-erythrose 4-phosphate + beta-D-fructose 6-phosphate. The protein operates within carbohydrate degradation; pentose phosphate pathway; D-glyceraldehyde 3-phosphate and beta-D-fructose 6-phosphate from D-ribose 5-phosphate and D-xylulose 5-phosphate (non-oxidative stage): step 2/3. Functionally, transaldolase is important for the balance of metabolites in the pentose-phosphate pathway. This chain is Transaldolase, found in Cellvibrio japonicus (strain Ueda107) (Pseudomonas fluorescens subsp. cellulosa).